The primary structure comprises 320 residues: Putative protein FRMPD2-like (320 aa).

PDZ domains follow at residues 1–46 and 90–178; these read MTSI…ERRV and EVKL…CRPP. The disordered stretch occupies residues 215–239; it reads DQEDSWRDSASPDAGEGLGLRPESS.

The protein is Putative protein FRMPD2-like of Homo sapiens (Human).